Here is a 368-residue protein sequence, read N- to C-terminus: 4-hydroxy-3-methylbut-2-en-1-yl diphosphate synthase (flavodoxin) (368 aa).

[4Fe-4S] cluster-binding residues include C271, C274, C306, and E313.

It belongs to the IspG family. [4Fe-4S] cluster is required as a cofactor.

It catalyses the reaction (2E)-4-hydroxy-3-methylbut-2-enyl diphosphate + oxidized [flavodoxin] + H2O + 2 H(+) = 2-C-methyl-D-erythritol 2,4-cyclic diphosphate + reduced [flavodoxin]. The protein operates within isoprenoid biosynthesis; isopentenyl diphosphate biosynthesis via DXP pathway; isopentenyl diphosphate from 1-deoxy-D-xylulose 5-phosphate: step 5/6. Converts 2C-methyl-D-erythritol 2,4-cyclodiphosphate (ME-2,4cPP) into 1-hydroxy-2-methyl-2-(E)-butenyl 4-diphosphate. The protein is 4-hydroxy-3-methylbut-2-en-1-yl diphosphate synthase (flavodoxin) of Mannheimia succiniciproducens (strain KCTC 0769BP / MBEL55E).